We begin with the raw amino-acid sequence, 367 residues long: Peptide chain release factor 2 (367 aa).

Glutamine 249 carries the post-translational modification N5-methylglutamine.

This sequence belongs to the prokaryotic/mitochondrial release factor family. Methylated by PrmC. Methylation increases the termination efficiency of RF2.

Its subcellular location is the cytoplasm. In terms of biological role, peptide chain release factor 2 directs the termination of translation in response to the peptide chain termination codons UGA and UAA. The chain is Peptide chain release factor 2 from Pseudothermotoga lettingae (strain ATCC BAA-301 / DSM 14385 / NBRC 107922 / TMO) (Thermotoga lettingae).